We begin with the raw amino-acid sequence, 119 residues long: MAADKQQQQAPVAFNPADPPNIKAANFKDMLPVDVITILNQNIDELDYTKYTEDEISEGLKQLFMGTARTMVSLRQRHLKSLVRRSDMFAQNDASTWARPNIGLKRTFPPRFMQPISED.

This sequence belongs to the herpesviridae small capsomere-interacting protein family. In terms of assembly, interacts with the major capsid protein/MCP.

Its subcellular location is the virion. It is found in the host nucleus. Functionally, participates in the assembly of the infectious particles by decorating the outer surface of the capsid shell and thus forming a layer between the capsid and the tegument. Complexes composed of the major capsid protein and small capsomere-interacting protein/SCP assemble together in the host cytoplasm and are translocated to the nucleus, where they accumulate and participate in capsid assembly. The sequence is that of Small capsomere-interacting protein from Equine herpesvirus 1 (strain V592) (EHV-1).